We begin with the raw amino-acid sequence, 278 residues long: MRNRAVLFGLFFIGYSSCVFHATPTRASLVENPDVESTHVEQWDSNGKRLLQVDGPKRILAEERGMSEGILPAAEAVEKTKVSEKAVPRASLGSKLNPMTWPKRILHKLKLWYARFLHWLLRKATVDEKTIDRSMMNGLTPSNLKRVKNDILHYSSSVPHDKIEIETDYDSYVEHFFGQFKGLDKDPPVFEMDKWNNLEKEMTKAEGYLKRRALNTVSRNIDKGLSNEQLISLDVSPFVYMRLLEKRGVFKDVENNKDKIDQLKDYIKAYKEHLMVEQ.

The signal sequence occupies residues 1 to 18 (MRNRAVLFGLFFIGYSSC). The short motif at 49 to 64 (RLLQVDGPKRILAEER) is the RxLR-dEER element.

Belongs to the RxLR effector family.

It localises to the secreted. It is found in the host endoplasmic reticulum membrane. In terms of biological role, secreted effector that completely suppresses the host cell death induced by cell death-inducing proteins. This Plasmopara viticola (Downy mildew of grapevine) protein is Secreted RxLR effector protein 151.